The primary structure comprises 479 residues: Anaerobic nitric oxide reductase flavorubredoxin (479 aa).

Positions 30-210 (LRGSSYNSYL…PFSRLVTPKI (181 aa)) are zinc metallo-hydrolase. 6 residues coordinate Fe cation: histidine 79, glutamate 81, aspartate 83, histidine 147, aspartate 166, and histidine 227. Residues 254–393 (ITIFYDTMSN…LCRQHGRDIA (140 aa)) form the Flavodoxin-like domain. Residues 260–264 (TMSNN) and 342–369 (AFGS…EMSL) each bind FMN. The Rubredoxin-like domain occupies 423–474 (GPKMQCSVCQWIYDPALGEPLQDVAPGTPWSEVPDNFLCPECSLGKDVFDVL). Positions 428, 431, 461, and 464 each coordinate Fe cation.

The protein in the N-terminal section; belongs to the zinc metallo-hydrolase group 3 family. In terms of assembly, homotetramer. Fe cation is required as a cofactor. It depends on FMN as a cofactor.

The protein resides in the cytoplasm. It participates in nitrogen metabolism; nitric oxide reduction. Functionally, anaerobic nitric oxide reductase; uses NADH to detoxify nitric oxide (NO), protecting several 4Fe-4S NO-sensitive enzymes. Has at least 2 reductase partners, only one of which (NorW, flavorubredoxin reductase) has been identified. NO probably binds to the di-iron center; electrons enter from the NorW at rubredoxin and are transferred sequentially to the FMN center and the di-iron center. Also able to function as an aerobic oxygen reductase. This chain is Anaerobic nitric oxide reductase flavorubredoxin, found in Salmonella paratyphi A (strain ATCC 9150 / SARB42).